Consider the following 427-residue polypeptide: Phosphoribosylamine--glycine ligase (427 aa).

Residues 109–313 (RNLMAEYKIE…LAEVVTGITE (205 aa)) enclose the ATP-grasp domain. ATP is bound at residue 136–191 (VRDHDGDLAVKPIGLTGGKGVRIMGEQVDRAGAIEYIREINGGVVLEERLTGEEFT). Mg(2+) is bound by residues Gln271, Glu283, and Asn285. The Mn(2+) site is built by Gln271, Glu283, and Asn285.

This sequence belongs to the GARS family. Mg(2+) serves as cofactor. The cofactor is Mn(2+).

The catalysed reaction is 5-phospho-beta-D-ribosylamine + glycine + ATP = N(1)-(5-phospho-beta-D-ribosyl)glycinamide + ADP + phosphate + H(+). Its pathway is purine metabolism; IMP biosynthesis via de novo pathway; N(1)-(5-phospho-D-ribosyl)glycinamide from 5-phospho-alpha-D-ribose 1-diphosphate: step 2/2. The protein is Phosphoribosylamine--glycine ligase of Methanoregula boonei (strain DSM 21154 / JCM 14090 / 6A8).